Reading from the N-terminus, the 67-residue chain is ATP synthase F(0) complex subunit 8 (67 aa).

A helical transmembrane segment spans residues 8 to 24 (TWFITIISSMATLFILF). Lysine 54 is modified (N6-acetyllysine; alternate). Lysine 54 is subject to N6-succinyllysine; alternate. Lysine 57 carries the N6-acetyllysine modification.

The protein belongs to the ATPase protein 8 family. Component of the ATP synthase complex composed at least of ATP5F1A/subunit alpha, ATP5F1B/subunit beta, ATP5MC1/subunit c (homooctomer), MT-ATP6/subunit a, MT-ATP8/subunit 8, ATP5ME/subunit e, ATP5MF/subunit f, ATP5MG/subunit g, ATP5MK/subunit k, ATP5MJ/subunit j, ATP5F1C/subunit gamma, ATP5F1D/subunit delta, ATP5F1E/subunit epsilon, ATP5PF/subunit F6, ATP5PB/subunit b, ATP5PD/subunit d, ATP5PO/subunit OSCP. ATP synthase complex consists of a soluble F(1) head domain (subunits alpha(3) and beta(3)) - the catalytic core - and a membrane F(0) domain - the membrane proton channel (subunits c, a, 8, e, f, g, k and j). These two domains are linked by a central stalk (subunits gamma, delta, and epsilon) rotating inside the F1 region and a stationary peripheral stalk (subunits F6, b, d, and OSCP). Interacts with PRICKLE3.

Its subcellular location is the mitochondrion membrane. Its function is as follows. Subunit 8, of the mitochondrial membrane ATP synthase complex (F(1)F(0) ATP synthase or Complex V) that produces ATP from ADP in the presence of a proton gradient across the membrane which is generated by electron transport complexes of the respiratory chain. ATP synthase complex consist of a soluble F(1) head domain - the catalytic core - and a membrane F(1) domain - the membrane proton channel. These two domains are linked by a central stalk rotating inside the F(1) region and a stationary peripheral stalk. During catalysis, ATP synthesis in the catalytic domain of F(1) is coupled via a rotary mechanism of the central stalk subunits to proton translocation. In vivo, can only synthesize ATP although its ATP hydrolase activity can be activated artificially in vitro. Part of the complex F(0) domain. This is ATP synthase F(0) complex subunit 8 from Rattus norvegicus (Rat).